Consider the following 68-residue polypeptide: Inhibitor of trypsin and hageman factor (68 aa).

N-acetylserine is present on Ser1. An intrachain disulfide couples Cys3 to Cys48.

It belongs to the protease inhibitor I13 (potato type I serine protease inhibitor) family.

In terms of biological role, specifically inhibits both trypsin and activated Hageman factor. The polypeptide is Inhibitor of trypsin and hageman factor (Cucurbita maxima (Pumpkin)).